Reading from the N-terminus, the 208-residue chain is uncharacterized protein (208 aa).

This is an uncharacterized protein from Acidianus sp. F28 (AFV-2).